Reading from the N-terminus, the 195-residue chain is Small ribosomal subunit protein uS4 (195 aa).

In terms of domain architecture, S4 RNA-binding spans 88–150 (RRLENVVYRL…SKNVELIKLA (63 aa)).

This sequence belongs to the universal ribosomal protein uS4 family. As to quaternary structure, part of the 30S ribosomal subunit. Contacts protein S5. The interaction surface between S4 and S5 is involved in control of translational fidelity.

In terms of biological role, one of the primary rRNA binding proteins, it binds directly to 16S rRNA where it nucleates assembly of the body of the 30S subunit. Its function is as follows. With S5 and S12 plays an important role in translational accuracy. This is Small ribosomal subunit protein uS4 from Fusobacterium nucleatum subsp. nucleatum (strain ATCC 25586 / DSM 15643 / BCRC 10681 / CIP 101130 / JCM 8532 / KCTC 2640 / LMG 13131 / VPI 4355).